A 95-amino-acid chain; its full sequence is Small ribosomal subunit protein bS6 (95 aa).

It belongs to the bacterial ribosomal protein bS6 family.

Its function is as follows. Binds together with bS18 to 16S ribosomal RNA. This is Small ribosomal subunit protein bS6 from Corynebacterium urealyticum (strain ATCC 43042 / DSM 7109).